The sequence spans 195 residues: Large ribosomal subunit protein eL18 (195 aa).

K126 participates in a covalent cross-link: Glycyl lysine isopeptide (Lys-Gly) (interchain with G-Cter in SUMO2). S137 carries the phosphoserine modification. The interval H158–N195 is disordered. Phosphothreonine is present on T165. Composition is skewed to basic residues over residues S168–G178 and R185–N195. A Glycyl lysine isopeptide (Lys-Gly) (interchain with G-Cter in SUMO2) cross-link involves residue K171.

It belongs to the eukaryotic ribosomal protein eL18 family. In terms of assembly, component of the large ribosomal subunit.

Its subcellular location is the cytoplasm. It is found in the cytosol. The protein resides in the rough endoplasmic reticulum. In terms of biological role, component of the large ribosomal subunit. The sequence is that of Large ribosomal subunit protein eL18 (RPL18) from Sus scrofa (Pig).